The sequence spans 292 residues: Transcription factor HFR1 (292 aa).

The tract at residues 114–153 is disordered; it reads KRRIQVLSSDDESEEFTREVPSVTRKGSKRRRRDEKMSNK. A basic motif; degenerate region spans residues 134-147; sequence PSVTRKGSKRRRRD. The 50-residue stretch at 134-183 folds into the bHLH domain; it reads PSVTRKGSKRRRRDEKMSNKMRKLQQLVPNCHKTDKVSVLDKTIEYMKNL. Basic residues predominate over residues 139-153; the sequence is KGSKRRRRDEKMSNK. Positions 141–148 match the Nuclear localization signal motif; sequence SKRRRRDE. Residues 148–183 are helix-loop-helix motif; sequence EKMSNKMRKLQQLVPNCHKTDKVSVLDKTIEYMKNL.

As to quaternary structure, binds to FHY1 and FHL. Forms PHYA/FHY1/HFR1 complex. Homodimer and heterodimer with PIF3. Do not interact alone with either phytochrome A (phyA) or B (phyB), but REP1/PIF3 complex binds to phyA and phyB, preferentially to the Pfr forms. Forms non-functional heterodimer with PRE6, causing liberation of PIF4 from the transcriptionally inactive complex HFR1-PIF4. Repressed when bound to PRE1, PRE2 and PRE4. In terms of tissue distribution, mainly expressed in fruits and flowers and, to a lower extent, in leaves, stems, seedlings and roots.

It localises to the nucleus. In terms of biological role, atypical bHLH transcription factor that regulates photomorphogenesis through modulation of phytochrome (e.g. PHYA) and cryptochrome signalings. Suppresses the transcriptional regulation activity of PIF4 by forming non-DNA-binding heterodimer. The sequence is that of Transcription factor HFR1 from Arabidopsis thaliana (Mouse-ear cress).